The chain runs to 288 residues: MKSFCVKAPAKINLFLHVVEKKETGYHLIEGLFVFANLSNFLEIKVGEKDFRYDNPIVEFVNSELKISNKYNTVMRAVNLLLRHAPVRTKVTVKVVKNIPTSAGLGSGSSDAGAVIRTLGKLWKIDRPILNEIALSVGADVPASIDSKPVLVRGIGEELCYINKFSLPTNIVLAKPKKKFLSTPEVFSKYGGNFSKPIEWRDDTEKDLLKLLKETENDLQEIAISLVPEIRDVILALESQEGSILSRMSGSGVTCFGIFDSEENAKTAAVNIREKQPEWWVCDAQLIV.

Lys-11 is an active-site residue. 100-110 (PTSAGLGSGSS) serves as a coordination point for ATP. The active site involves Asp-140.

This sequence belongs to the GHMP kinase family. IspE subfamily.

It catalyses the reaction 4-CDP-2-C-methyl-D-erythritol + ATP = 4-CDP-2-C-methyl-D-erythritol 2-phosphate + ADP + H(+). It participates in isoprenoid biosynthesis; isopentenyl diphosphate biosynthesis via DXP pathway; isopentenyl diphosphate from 1-deoxy-D-xylulose 5-phosphate: step 3/6. In terms of biological role, catalyzes the phosphorylation of the position 2 hydroxy group of 4-diphosphocytidyl-2C-methyl-D-erythritol. The polypeptide is 4-diphosphocytidyl-2-C-methyl-D-erythritol kinase (Wolbachia sp. subsp. Brugia malayi (strain TRS)).